The following is a 284-amino-acid chain: Shikimate dehydrogenase (NADP(+)) (284 aa).

Shikimate is bound by residues 20-22 (SIS) and S67. Residue K71 is the Proton acceptor of the active site. D83 contributes to the NADP(+) binding site. Shikimate is bound by residues N92 and D107. NADP(+) is bound by residues 129-133 (GAGGA) and I227. A shikimate-binding site is contributed by Y229. Residue G250 coordinates NADP(+).

The protein belongs to the shikimate dehydrogenase family. In terms of assembly, homodimer.

The enzyme catalyses shikimate + NADP(+) = 3-dehydroshikimate + NADPH + H(+). It participates in metabolic intermediate biosynthesis; chorismate biosynthesis; chorismate from D-erythrose 4-phosphate and phosphoenolpyruvate: step 4/7. Functionally, involved in the biosynthesis of the chorismate, which leads to the biosynthesis of aromatic amino acids. Catalyzes the reversible NADPH linked reduction of 3-dehydroshikimate (DHSA) to yield shikimate (SA). This Streptococcus pneumoniae (strain CGSP14) protein is Shikimate dehydrogenase (NADP(+)).